Here is a 484-residue protein sequence, read N- to C-terminus: UDP-N-acetylmuramoyl-L-alanyl-D-glutamate--L-lysine ligase (484 aa).

Serine 43 provides a ligand contact to UDP-N-acetyl-alpha-D-muramoyl-L-alanyl-D-glutamate. Glycine 119–threonine 125 contacts ATP. UDP-N-acetyl-alpha-D-muramoyl-L-alanyl-D-glutamate-binding positions include threonine 161–threonine 162, serine 188, and arginine 196. Lysine 230 is modified (N6-carboxylysine). The L-lysine recognition motif motif lies at aspartate 405–asparagine 408.

It belongs to the MurCDEF family. MurE subfamily. In terms of processing, carboxylation is probably crucial for Mg(2+) binding and, consequently, for the gamma-phosphate positioning of ATP.

The protein resides in the cytoplasm. It catalyses the reaction UDP-N-acetyl-alpha-D-muramoyl-L-alanyl-D-glutamate + L-lysine + ATP = UDP-N-acetyl-alpha-D-muramoyl-L-alanyl-gamma-D-glutamyl-L-lysine + ADP + phosphate + H(+). It functions in the pathway cell wall biogenesis; peptidoglycan biosynthesis. Catalyzes the addition of L-lysine to the nucleotide precursor UDP-N-acetylmuramoyl-L-alanyl-D-glutamate (UMAG) in the biosynthesis of bacterial cell-wall peptidoglycan. This chain is UDP-N-acetylmuramoyl-L-alanyl-D-glutamate--L-lysine ligase, found in Streptococcus agalactiae serotype III (strain NEM316).